We begin with the raw amino-acid sequence, 1466 residues long: Helicase ARIP4 (1466 aa).

Disordered regions lie at residues 1-137 and 185-235; these read MSDE…ERRK and DSSS…THVN. Positions 11–49 are enriched in acidic residues; sequence PDLDPDVELEDEEEEEEEEEVAVEEHDRDDEEGLLDDTS. The span at 72-82 shows a compositional bias: low complexity; sequence TSTTSSQSEPS. A compositionally biased stretch (basic residues) spans 99–114; sequence KKRAQKPSHMRRNIRK. Residues Lys114 and Lys126 each participate in a glycyl lysine isopeptide (Lys-Gly) (interchain with G-Cter in SUMO2) cross-link. A compositionally biased stretch (basic and acidic residues) spans 191-200; that stretch reads EDEKSSRDEV. Lys271 participates in a covalent cross-link: Glycyl lysine isopeptide (Lys-Gly) (interchain with G-Cter in SUMO2). In terms of domain architecture, Helicase ATP-binding spans 291 to 511; the sequence is RFKTSSGFGC…WCMVDFVRPD (221 aa). Position 304–311 (304–311) interacts with ATP; the sequence is HSMGLGKT. Residues 462–465 carry the DEAH box motif; it reads DEGH. The LXXLL motif 1 signature appears at 550-554; sequence LHSLL. The tract at residues 649-670 is disordered; it reads SAGTSARCPPHGTKVKGEDSAL. Glycyl lysine isopeptide (Lys-Gly) (interchain with G-Cter in SUMO2) cross-links involve residues Lys664, Lys681, Lys758, Lys900, Lys1013, and Lys1017. The Helicase C-terminal domain occupies 727-895; the sequence is HLIEESVKLG…RVVDDLNPML (169 aa). Disordered regions lie at residues 1026–1045 and 1120–1170; these read QSTP…GVSS and ATGK…VSPD. Polar residues predominate over residues 1135-1154; it reads SGSQGPSLASTSNGRHSASS. Phosphoserine is present on residues Ser1168 and Ser1171. Disordered stretches follow at residues 1184 to 1212 and 1259 to 1281; these read VAAA…MDNS and TPSV…APVQ. At Thr1259 the chain carries Phosphothreonine. The LXXLL motif 2 signature appears at 1328-1332; the sequence is LSNLL. Positions 1444 to 1466 are disordered; that stretch reads AEVGFSSNDDEDKDDDVIEVTGK. The segment covering 1451 to 1466 has biased composition (acidic residues); it reads NDDEDKDDDVIEVTGK.

The protein belongs to the SNF2/RAD54 helicase family. As to quaternary structure, interacts with AR via its N-terminus. Interacts with DYRK1A. Binds DNA and mononucleosomes, but does not seem to form large multiprotein complexes. In terms of processing, sumoylated. As to expression, expressed at relatively low level, with highest expression in testis, liver and kidney. In brain, it is expressed in hippocampal and cerebellar neurons. In testis, it is present at high level in Sertoli cell nuclei. Also present in Leydig cell (at protein level).

It localises to the nucleus. The enzyme catalyses ATP + H2O = ADP + phosphate + H(+). With respect to regulation, enzyme activity is enhanced by dsDNA (double-stranded DNA) and ssDNA (single-stranded DNA). Functionally, DNA helicase that modulates androgen receptor (AR)-dependent transactivation in a promoter-dependent manner. Not able to remodel mononucleosomes in vitro. Acts as an AR-coregulator in Sertoli cells. This is Helicase ARIP4 (Rad54l2) from Mus musculus (Mouse).